We begin with the raw amino-acid sequence, 318 residues long: uncharacterized protein (318 aa).

The protein belongs to the NAD(P)-dependent epimerase/dehydratase family.

This is an uncharacterized protein from Staphylococcus epidermidis (strain ATCC 12228 / FDA PCI 1200).